A 595-amino-acid polypeptide reads, in one-letter code: DNA mismatch repair protein MutL (595 aa).

The protein belongs to the DNA mismatch repair MutL/HexB family.

In terms of biological role, this protein is involved in the repair of mismatches in DNA. It is required for dam-dependent methyl-directed DNA mismatch repair. May act as a 'molecular matchmaker', a protein that promotes the formation of a stable complex between two or more DNA-binding proteins in an ATP-dependent manner without itself being part of a final effector complex. The sequence is that of DNA mismatch repair protein MutL from Rhodopseudomonas palustris (strain ATCC BAA-98 / CGA009).